The chain runs to 498 residues: Galactose-1-phosphate uridylyltransferase (498 aa).

This sequence belongs to the galactose-1-phosphate uridylyltransferase type 2 family.

The protein resides in the cytoplasm. The catalysed reaction is alpha-D-galactose 1-phosphate + UDP-alpha-D-glucose = alpha-D-glucose 1-phosphate + UDP-alpha-D-galactose. Its pathway is carbohydrate metabolism; galactose metabolism. The chain is Galactose-1-phosphate uridylyltransferase from Latilactobacillus sakei subsp. sakei (strain 23K) (Lactobacillus sakei subsp. sakei).